Reading from the N-terminus, the 348-residue chain is MDLAANEISIYDKLSETVDLVRQTGHQCGMSEKAIEKFIRQLLEKNEPQRGPPQYPLLIAVYKVLLTLGLILFTAYFVIQPFSSLAPEPVLSGANSWRSLVHHIRLVSLPITKKYMPENKGVPLQGSQEDKPFPDFDPWSSYNCEQNESEPIPANCTGCAQILPLKVTLPEDTPKNFERLRPLVIKTGQPLSSAEIQSFSCQYPEVTEGFTEGFFTKWWRCFPERWFPFPYPWRRPLNRSQILRELFPVFTQLPFPKDSSLNKCFLIQPEPVVGSKMHKVHDLFTLGSGEAMLQLIPPFQCRTHCQSVAMPIESGDIGYADAAHWKVYIVARGVQPLVICDGTTLSDL.

The Cytoplasmic portion of the chain corresponds to 1–58 (MDLAANEISIYDKLSETVDLVRQTGHQCGMSEKAIEKFIRQLLEKNEPQRGPPQYPLL). Residues 59–79 (IAVYKVLLTLGLILFTAYFVI) traverse the membrane as a helical segment. Topologically, residues 80–348 (QPFSSLAPEP…ICDGTTLSDL (269 aa)) are extracellular.

As to quaternary structure, homodimer. Interacts with BRS3. Interacts (via N-terminus) with SIN3B. Post-translationally, glycosylated.

Its subcellular location is the golgi apparatus membrane. The protein localises to the cytoplasm. Functionally, exhibits histone deacetylase (HDAC) enhancer properties. May play a role in cell cycle progression and wound repair of bronchial epithelial cells. This is Bombesin receptor-activated protein C6orf89 homolog from Mus musculus (Mouse).